The sequence spans 384 residues: Flap endonuclease 1 (384 aa).

The segment at 1–105 (MGIKGLTKLL…GELAKRKDKR (105 aa)) is N-domain. Residue D34 coordinates Mg(2+). Position 71 (R71) interacts with DNA. Residues D87, E159, E161, D180, and D182 each coordinate Mg(2+). The I-domain stretch occupies residues 123 to 254 (EIEKLSKRTV…VNALKYIKQY (132 aa)). E159 contributes to the DNA binding site. Residues G232 and D234 each coordinate DNA. D234 is a Mg(2+) binding site. The interval 337-345 (GQNRLETFF) is interaction with PCNA. The interval 353–384 (STVGKRKEPEKGKGKFGAAGGKKSKGVTKRKF) is disordered. The span at 374–384 (KKSKGVTKRKF) shows a compositional bias: basic residues.

This sequence belongs to the XPG/RAD2 endonuclease family. FEN1 subfamily. As to quaternary structure, interacts with PCNA. Three molecules of FEN1 bind to one PCNA trimer with each molecule binding to one PCNA monomer. PCNA stimulates the nuclease activity without altering cleavage specificity. Mg(2+) serves as cofactor. In terms of processing, phosphorylated. Phosphorylation upon DNA damage induces relocalization to the nuclear plasma.

The protein localises to the nucleus. It is found in the nucleolus. The protein resides in the nucleoplasm. Its subcellular location is the mitochondrion. Structure-specific nuclease with 5'-flap endonuclease and 5'-3' exonuclease activities involved in DNA replication and repair. During DNA replication, cleaves the 5'-overhanging flap structure that is generated by displacement synthesis when DNA polymerase encounters the 5'-end of a downstream Okazaki fragment. It enters the flap from the 5'-end and then tracks to cleave the flap base, leaving a nick for ligation. Also involved in the long patch base excision repair (LP-BER) pathway, by cleaving within the apurinic/apyrimidinic (AP) site-terminated flap. Acts as a genome stabilization factor that prevents flaps from equilibrating into structures that lead to duplications and deletions. Also possesses 5'-3' exonuclease activity on nicked or gapped double-stranded DNA, and exhibits RNase H activity. Also involved in replication and repair of rDNA and in repairing mitochondrial DNA. This chain is Flap endonuclease 1, found in Micromonas commoda (strain RCC299 / NOUM17 / CCMP2709) (Picoplanktonic green alga).